A 284-amino-acid chain; its full sequence is Ubiquinone biosynthesis protein COQ4, mitochondrial (284 aa).

The Zn(2+) site is built by His165, Asp166, His169, and Glu181.

Belongs to the COQ4 family. As to quaternary structure, component of a multi-subunit COQ enzyme complex, composed of at least COQ3, COQ4, COQ5, COQ6, COQ7 and COQ9. Requires Zn(2+) as cofactor.

It localises to the mitochondrion inner membrane. The enzyme catalyses a 4-hydroxy-3-methoxy-5-(all-trans-polyprenyl)benzoate + H(+) = a 2-methoxy-6-(all-trans-polyprenyl)phenol + CO2. It functions in the pathway cofactor biosynthesis; ubiquinone biosynthesis. Its function is as follows. Lyase that catalyzes the C1-decarboxylation of 4-hydroxy-3-methoxy-5-(all-trans-polyprenyl)benzoic acid into 2-methoxy-6-(all-trans-polyprenyl)phenol during ubiquinone biosynthesis. This is Ubiquinone biosynthesis protein COQ4, mitochondrial from Ajellomyces dermatitidis (strain ER-3 / ATCC MYA-2586) (Blastomyces dermatitidis).